Reading from the N-terminus, the 168-residue chain is Calcium-binding protein 2 (168 aa).

EF-hand domains are found at residues 13–48 (GMEKDLESLFKKYDSDRNGKITYIEIVETLRKAGKK), 48–83 (KNPERIADLLFRDDTDKNGELTIEEAKLRIVRMNDE), 88–123 (VLNWDVEKFINDNDKDGDRKITRDEVLQRFTEQGAE), and 124–159 (DPELITDSIFRQMDLDRDGVITCDEIKEFNRKKKFS). Ca(2+) is bound by residues aspartate 26, aspartate 28, asparagine 30, lysine 32, glutamate 37, aspartate 61, aspartate 63, asparagine 65, glutamate 67, glutamate 72, aspartate 101, aspartate 103, aspartate 105, lysine 107, glutamate 112, aspartate 137, aspartate 139, aspartate 141, and glutamate 148.

Its function is as follows. Not known; probably binds four calcium ions. This Dictyostelium discoideum (Social amoeba) protein is Calcium-binding protein 2 (cbp2).